The chain runs to 720 residues: Photosystem I P700 chlorophyll a apoprotein A1 (720 aa).

A run of 8 helical transmembrane segments spans residues Ile-62–Ala-85, Leu-148–His-171, Leu-186–Leu-210, Ile-282–Tyr-300, Trp-337–Tyr-360, Leu-376–Val-402, Ala-424–His-446, and Phe-522–Leu-540. [4Fe-4S] cluster is bound by residues Cys-564 and Cys-573. 2 helical membrane passes run His-580–Trp-601 and Leu-655–Phe-677. His-666 contributes to the chlorophyll a' binding site. Residues Met-674 and Tyr-682 each coordinate chlorophyll a. Residue Trp-683 participates in phylloquinone binding. Residues Ala-715–His-720 traverse the membrane as a helical segment.

The protein belongs to the PsaA/PsaB family. As to quaternary structure, the PsaA/B heterodimer binds the P700 chlorophyll special pair and subsequent electron acceptors. PSI consists of a core antenna complex that captures photons, and an electron transfer chain that converts photonic excitation into a charge separation. The eukaryotic PSI reaction center is composed of at least 11 subunits. P700 is a chlorophyll a/chlorophyll a' dimer, A0 is one or more chlorophyll a, A1 is one or both phylloquinones and FX is a shared 4Fe-4S iron-sulfur center. is required as a cofactor.

It localises to the plastid. The protein resides in the chloroplast thylakoid membrane. The enzyme catalyses reduced [plastocyanin] + hnu + oxidized [2Fe-2S]-[ferredoxin] = oxidized [plastocyanin] + reduced [2Fe-2S]-[ferredoxin]. Functionally, psaA and PsaB bind P700, the primary electron donor of photosystem I (PSI), as well as the electron acceptors A0, A1 and FX. PSI is a plastocyanin-ferredoxin oxidoreductase, converting photonic excitation into a charge separation, which transfers an electron from the donor P700 chlorophyll pair to the spectroscopically characterized acceptors A0, A1, FX, FA and FB in turn. Oxidized P700 is reduced on the lumenal side of the thylakoid membrane by plastocyanin. This Ephedra tweediana (Vining horsetail) protein is Photosystem I P700 chlorophyll a apoprotein A1.